Consider the following 326-residue polypeptide: Aquaporin-4 (326 aa).

Over 1–39 (MSDGAGAAARRWGKCGGRSCSRESIMVAFKGVWTQAFWK) the chain is Cytoplasmic. Residues Cys-15 and Cys-20 are each lipidated (S-palmitoyl cysteine). Residues 40–60 (AVTAEFLAMLIFVLLSVGSTI) form a helical membrane-spanning segment. Topologically, residues 61 to 72 (NWGGSENPLPVD) are extracellular. A helical transmembrane segment spans residues 73 to 92 (MVLISLCFGLSIATMVQCFG). The Cytoplasmic portion of the chain corresponds to 93–96 (HISG). The discontinuously helical intramembrane region spans 97 to 104 (GHINPAVT). Positions 100–102 (NPA) match the NPA 1 motif. At 105–118 (VAMVCTRKISIAKS) the chain is on the cytoplasmic side. A Phosphoserine; by PKG modification is found at Ser-114. A helical transmembrane segment spans residues 119–139 (VFYITAQCLGAIIGAGILYLV). At 140–158 (TPPNVVGGLGVTTVHGNLT) the chain is on the extracellular side. Asn-156 carries N-linked (GlcNAc...) asparagine glycosylation. Residues 159–179 (AGHGLLVELIITFQLVFTIFA) traverse the membrane as a helical segment. The Cytoplasmic segment spans residues 180–187 (SCDSKRTD). Ser-183 bears the Phosphoserine; by PKC mark. Residues 188 to 208 (VTGSIALAIGFSVAIGHLFAI) form a helical membrane-spanning segment. Residue Asn-209 is glycosylated (N-linked (GlcNAc...) asparagine). At 209–211 (NYT) the chain is on the extracellular side. Positions 212 to 225 (GASMNPARSFGPAV) form an intramembrane region, discontinuously helical. An NPA 2 motif is present at residues 216–218 (NPA). Residues 226 to 234 (IMGNWENHW) lie on the Extracellular side of the membrane. Residues 235–255 (IYWVGPIIGAVLAGALYEYVF) form a helical membrane-spanning segment. The Cytoplasmic segment spans residues 256 to 326 (CPDVELKRRL…DSAGEVLSSV (71 aa)). Phosphoserine is present on residues Ser-279 and Ser-288. Position 292 is a phosphothreonine (Thr-292). Position 324 is a phosphoserine (Ser-324).

It belongs to the MIP/aquaporin (TC 1.A.8) family. As to quaternary structure, homotetramer. The tetramers can form oligomeric arrays in membranes. The size of the oligomers differs between tissues and is smaller in skeletal muscle than in brain. Interaction between AQP4 oligomeric arrays in close-by cells can contribute to cell-cell adhesion. Part of a complex containing MLC1, TRPV4, HEPACAM and ATP1B1. In terms of processing, phosphorylation by PKC at Ser-183 reduces conductance by 50%. Phosphorylation by PKG at Ser-114 in response to glutamate increases conductance by 40%. Post-translationally, isoform Long: Palmitoylated on its N-terminal region.

It localises to the cell membrane. Its subcellular location is the basolateral cell membrane. It is found in the endosome membrane. The protein resides in the sarcolemma. The protein localises to the cell projection. The catalysed reaction is H2O(in) = H2O(out). Forms a water-specific channel. Plays an important role in brain water homeostasis and in glymphatic solute transport. Required for a normal rate of water exchange across the blood brain interface. Required for normal levels of cerebrospinal fluid influx into the brain cortex and parenchyma along paravascular spaces that surround penetrating arteries, and for normal drainage of interstitial fluid along paravenous drainage pathways. Thereby, it is required for normal clearance of solutes from the brain interstitial fluid, including soluble beta-amyloid peptides derived from APP. Plays a redundant role in urinary water homeostasis and urinary concentrating ability. The polypeptide is Aquaporin-4 (AQP4) (Notomys alexis (Spinifex hopping mouse)).